The following is a 122-amino-acid chain: Large ribosomal subunit protein bL12 (122 aa).

This sequence belongs to the bacterial ribosomal protein bL12 family. Homodimer. Part of the ribosomal stalk of the 50S ribosomal subunit. Forms a multimeric L10(L12)X complex, where L10 forms an elongated spine to which 2 to 4 L12 dimers bind in a sequential fashion. Binds GTP-bound translation factors.

In terms of biological role, forms part of the ribosomal stalk which helps the ribosome interact with GTP-bound translation factors. Is thus essential for accurate translation. This is Large ribosomal subunit protein bL12 from Mycoplasma capricolum subsp. capricolum (strain California kid / ATCC 27343 / NCTC 10154).